The following is a 299-amino-acid chain: DNA-binding transcriptional activator HetR (299 aa).

The tract at residues 1-98 (MSNDIDLIKR…GKLLKTLGSQ (98 aa)) is DNA-binding domain. DNA-binding positions include 34–40 (RHGAFLD) and 60–76 (NLRMTGHLHHLEPKRVK). A flap domain region spans residues 99-216 (EPRYLIQFPY…FYALTRPFYA (118 aa)). The active site involves S152. 179 to 181 (SEA) is a binding site for DNA. The segment at 217-299 (PADDQERTYI…LQMVFGRKED (83 aa)) is hood domain.

This sequence belongs to the peptidase S48 family. As to quaternary structure, upon expression in E.coli most protein is monomeric, although varying amounts of homodimer can be seen. Homodimer; disulfide-linked. Homodimer. Binds the 6 residue C-terminal peptide of PatS; one peptide binds to each subunit. In bacterial two-hybrid assays interacts robustly with itself, Alr2902 and Alr3234 and more weakly with Als1930. Post-translationally, probably autodegrades.

Its activity is regulated as follows. Protease activity is inhibited by PMSF, suggesting this is a serine protease. In terms of biological role, controls heterocyst differentiation. Dimerization is required for DNA-binding. Has both a protease and a DNA-binding activity. Functionally, controls heterocyst differentiation; increased expression leads to more heterocysts than usual. Has protease activity. Binds the promoter regions of hetR, hepA and patS and is required for their expression. Dimerization is required for DNA-binding, DNA-binding is inhibited by the PatS6 peptide. Binds the inverted repeat 5'-GTAGGCGAGGGGTCTAACCCCTCATTACC-3' found in the hetP promoter, required for expression of hetP. The polypeptide is DNA-binding transcriptional activator HetR (Nostoc sp. (strain PCC 7120 / SAG 25.82 / UTEX 2576)).